We begin with the raw amino-acid sequence, 393 residues long: Cysteine protease ATG4B (393 aa).

At methionine 1 the chain carries N-acetylmethionine. Residue serine 34 is modified to Phosphoserine. Cysteine 74 serves as the catalytic Nucleophile. The residue at position 189 (cysteine 189) is an S-nitrosocysteine. Catalysis depends on residues aspartate 278 and histidine 280. S-nitrosocysteine occurs at positions 292 and 301. A disulfide bridge connects residues cysteine 292 and cysteine 361. A phosphoserine mark is found at serine 316 and serine 383. The short motif at 388–391 (FEIL) is the LIR element. Serine 392 carries the post-translational modification Phosphoserine.

It belongs to the peptidase C54 family. In terms of assembly, interacts with PFKP; promoting phosphorylation of ATG4B at Ser-34. Interacts with GBP7. In terms of processing, phosphorylation at Ser-383 and Ser-392 promotes autophagy by increasing protein delipidation activity without affecting proteolytic activation of ATG8 proteins. Phosphorylation at Ser-316 by ULK1 inhibits autophagy by decreasing both proteolytic activation and delipidation activities. Phosphorylation at Ser-316 is dephosphorylated by protein phosphatase 2A (PP2A). Phosphorylation at Ser-34 by AKT2 promotes its hydrolase activity, leading to increased proteolytic activation and delipidation of ATG8 family proteins. Phosphorylation at Ser-34 by AKT1 promotes mitochondrial localization and inhibition of the F1F0-ATP synthase activity, leading to elevation of mitochondrial reactive oxygen species (ROS). Ubiquitinated by RNF5, leading to its degradation by the proteasome. Post-translationally, S-nitrosylation at Cys-189 and Cys-292 in response to high glucose decreases both proteolytic activation and delipidation activities. In terms of processing, O-glycosylated by OGT, leading to increase protease activity, thereby promoting the proteolytic activation of ATG8 family proteins. Forms reversible intrachain disulfide bonds in response to oxidative stress. Forms interchain disulfide bonds, leading to formation of homooligomers in response to oxidation.

Its subcellular location is the cytoplasm. It is found in the cytosol. The protein localises to the cytoplasmic vesicle. The protein resides in the autophagosome. It localises to the endoplasmic reticulum. Its subcellular location is the mitochondrion. It carries out the reaction [protein]-C-terminal L-amino acid-glycyl-phosphatidylethanolamide + H2O = [protein]-C-terminal L-amino acid-glycine + a 1,2-diacyl-sn-glycero-3-phosphoethanolamine. It catalyses the reaction [protein]-C-terminal L-amino acid-glycyl-phosphatidylserine + H2O = [protein]-C-terminal L-amino acid-glycine + a 1,2-diacyl-sn-glycero-3-phospho-L-serine. With respect to regulation, inhibited by N-ethylmaleimide. Redox-regulated during autophagy since reducing conditions activate ATG4A whereas an oxidizing environment such as the presence of H(2)O(2) inhibits its activity. The cysteine protease activity compounds is inhibited by styrylquinoline compounds 4-28 and LV-320. Functionally, cysteine protease that plays a key role in autophagy by mediating both proteolytic activation and delipidation of ATG8 family proteins. Required for canonical autophagy (macroautophagy), non-canonical autophagy as well as for mitophagy. The protease activity is required for proteolytic activation of ATG8 family proteins: cleaves the C-terminal amino acid of ATG8 proteins MAP1LC3A, MAP1LC3B, MAP1LC3C, GABARAPL1, GABARAPL2 and GABARAP, to reveal a C-terminal glycine. Exposure of the glycine at the C-terminus is essential for ATG8 proteins conjugation to phosphatidylethanolamine (PE) and insertion to membranes, which is necessary for autophagy. Protease activity is also required to counteract formation of high-molecular weight conjugates of ATG8 proteins (ATG8ylation): acts as a deubiquitinating-like enzyme that removes ATG8 conjugated to other proteins, such as ATG3. In addition to the protease activity, also mediates delipidation of ATG8 family proteins. Catalyzes delipidation of PE-conjugated forms of ATG8 proteins during macroautophagy. Also involved in non-canonical autophagy, a parallel pathway involving conjugation of ATG8 proteins to single membranes at endolysosomal compartments, by catalyzing delipidation of ATG8 proteins conjugated to phosphatidylserine (PS). Compared to other members of the family (ATG4A, ATG4C or ATG4C), constitutes the major protein for proteolytic activation of ATG8 proteins, while it displays weaker delipidation activity than other ATG4 paralogs. Involved in phagophore growth during mitophagy independently of its protease activity and of ATG8 proteins: acts by regulating ATG9A trafficking to mitochondria and promoting phagophore-endoplasmic reticulum contacts during the lipid transfer phase of mitophagy. Its function is as follows. (Microbial infection) Mediates cleavage of an ATG8 protein homolog coded in the genome of cytopathogenic bovine viral diarrhea virus (BVDV). The sequence is that of Cysteine protease ATG4B (ATG4B) from Bos taurus (Bovine).